A 407-amino-acid chain; its full sequence is Leucine-rich repeat-containing protein 42 (407 aa).

5 LRR repeats span residues Val138–Arg159, Ser163–Ile184, Ser191–Thr211, Asn223–Thr243, and Thr247–Phe268. The interval Val360 to Pro389 is disordered.

This sequence belongs to the LRRC42 family.

This chain is Leucine-rich repeat-containing protein 42 (lrrc42), found in Danio rerio (Zebrafish).